The following is a 294-amino-acid chain: 4-hydroxy-tetrahydrodipicolinate synthase (294 aa).

Pyruvate is bound at residue Thr44. Tyr132 (proton donor/acceptor) is an active-site residue. Lys161 acts as the Schiff-base intermediate with substrate in catalysis. Ile206 contacts pyruvate.

This sequence belongs to the DapA family. Homotetramer; dimer of dimers.

It localises to the cytoplasm. It carries out the reaction L-aspartate 4-semialdehyde + pyruvate = (2S,4S)-4-hydroxy-2,3,4,5-tetrahydrodipicolinate + H2O + H(+). The protein operates within amino-acid biosynthesis; L-lysine biosynthesis via DAP pathway; (S)-tetrahydrodipicolinate from L-aspartate: step 3/4. In terms of biological role, catalyzes the condensation of (S)-aspartate-beta-semialdehyde [(S)-ASA] and pyruvate to 4-hydroxy-tetrahydrodipicolinate (HTPA). The protein is 4-hydroxy-tetrahydrodipicolinate synthase of Thermotoga neapolitana (strain ATCC 49049 / DSM 4359 / NBRC 107923 / NS-E).